Reading from the N-terminus, the 141-residue chain is HTH-type transcriptional regulator MntR (141 aa).

Positions 1–63 (MPTPSMEDYI…YEKYRGLVLT (63 aa)) constitute an HTH dtxR-type domain. Residues aspartate 8, glutamate 11, histidine 77, glutamate 99, glutamate 102, and histidine 103 each contribute to the Mn(2+) site.

This sequence belongs to the DtxR/MntR family. Homodimer.

It is found in the cytoplasm. With respect to regulation, DNA binding is strongly activated by Mn(2+). Functionally, central regulator of manganese homeostasis. This is HTH-type transcriptional regulator MntR from Geobacillus kaustophilus (strain HTA426).